Reading from the N-terminus, the 221-residue chain is LHFPL tetraspan subfamily member 5 protein (221 aa).

The Cytoplasmic portion of the chain corresponds to 1–24 (MPKLLPAQEAARIYHTNYVRNARA). The chain crosses the membrane as a helical span at residues 25–45 (MGVLWALFTLCFSILMVVTFI). Over 46–98 (QPYWIGDSIDTPQAGYFGLFSYCIGNALTGELICKGSPLDFGTIPSSAFKTAM) the chain is Extracellular. The chain crosses the membrane as a helical span at residues 99–119 (FFVGISTFLIIGSILCFSLFF). The Cytoplasmic segment spans residues 120 to 128 (FCNAATVYK). The chain crosses the membrane as a helical span at residues 129-149 (VCAWMQLAAATGLMIGCLIYP). At 150–179 (DGWDSSEVKRMCGDKTDKYTLGACTVRWAY) the chain is on the extracellular side. A helical membrane pass occupies residues 180–200 (ILCIIGILDALILSFLAFVLG). At 201-221 (NRQDNLLPSDFKVESKEEGNE) the chain is on the cytoplasmic side.

Belongs to the LHFP family.

The protein resides in the cell membrane. Probable component of the mechanotransducer (MET) non-specific cation channel complex. The protein is LHFPL tetraspan subfamily member 5 protein of Gallus gallus (Chicken).